The following is a 33-amino-acid chain: Large ribosomal subunit protein eL21 (33 aa).

The protein belongs to the eukaryotic ribosomal protein eL21 family. Component of the large ribosomal subunit.

The protein localises to the cytoplasm. It is found in the cytosol. The protein resides in the endoplasmic reticulum. In terms of biological role, component of the large ribosomal subunit. The ribosome is a large ribonucleoprotein complex responsible for the synthesis of proteins in the cell. This is Large ribosomal subunit protein eL21 (rpl21) from Xenopus laevis (African clawed frog).